The chain runs to 30 residues: Conotoxin TVIIA (30 aa).

3 cysteine pairs are disulfide-bonded: cysteine 2/cysteine 14, cysteine 9/cysteine 19, and cysteine 13/cysteine 24. Proline 10 and proline 11 each carry 4-hydroxyproline.

Post-translationally, three different forms of TVIIA exist. Pro-10 and Pro-11 of conotoxin TVIIA are hydroxylated in TVIIA, whereas Pro-10 is not hydroxylated in [Pro10]TVIIA and neither Pro-10 nor Pro-11 are hydroxylated in [Pro10,11]TVIIA. As to expression, expressed by the venom duct.

The protein localises to the secreted. Functionally, by structural similarity with conotoxin GS, may inhibit the sodium channel (Nav). No effect was observed upon intracranial injections into mice and intraperitoneal injections into goldfish (25 ug). This Conus tulipa (Fish-hunting cone snail) protein is Conotoxin TVIIA.